An 883-amino-acid polypeptide reads, in one-letter code: Phosphoenolpyruvate carboxylase (883 aa).

Catalysis depends on residues histidine 138 and lysine 546.

This sequence belongs to the PEPCase type 1 family. It depends on Mg(2+) as a cofactor.

It catalyses the reaction oxaloacetate + phosphate = phosphoenolpyruvate + hydrogencarbonate. Functionally, forms oxaloacetate, a four-carbon dicarboxylic acid source for the tricarboxylic acid cycle. The chain is Phosphoenolpyruvate carboxylase from Escherichia fergusonii (strain ATCC 35469 / DSM 13698 / CCUG 18766 / IAM 14443 / JCM 21226 / LMG 7866 / NBRC 102419 / NCTC 12128 / CDC 0568-73).